We begin with the raw amino-acid sequence, 85 residues long: Acyl carrier protein (85 aa).

The Carrier domain occupies 4-79; it reads DELFEKVKEI…NAVNLLSEKL (76 aa). O-(pantetheine 4'-phosphoryl)serine is present on S39.

The protein belongs to the acyl carrier protein (ACP) family. 4'-phosphopantetheine is transferred from CoA to a specific serine of apo-ACP by AcpS. This modification is essential for activity because fatty acids are bound in thioester linkage to the sulfhydryl of the prosthetic group.

It localises to the cytoplasm. Its pathway is lipid metabolism; fatty acid biosynthesis. In terms of biological role, carrier of the growing fatty acid chain in fatty acid biosynthesis. This chain is Acyl carrier protein, found in Petrotoga mobilis (strain DSM 10674 / SJ95).